A 223-amino-acid chain; its full sequence is MAASSPSLLLPLGSASRNGLTTKNPNSSRYIAARVIASETREQSCKISNLSSRREAMLLVLGVSGGLSMSSLAAYAAGLPPEDKPRLCEAECEKELENVPMVTTESGLQYKDIKVGRGPSPPVGFQVAANYVAMVPSGQIFDSSLEKGLPYLFRVGSGQVIKGLDEGILSMKAGGKRRLYIPGPLAFPKGLVSAPGRPRVAPNSPVIFDVSLEFIPGLDSEEE.

Residues 1–36 (MAASSPSLLLPLGSASRNGLTTKNPNSSRYIAARVI) constitute a chloroplast transit peptide. The transit peptide at 37–76 (ASETREQSCKISNLSSRREAMLLVLGVSGGLSMSSLAAYA) directs the protein to the thylakoid. The PPIase FKBP-type domain maps to 124–216 (GFQVAANYVA…IFDVSLEFIP (93 aa)).

This sequence belongs to the FKBP-type PPIase family.

It localises to the plastid. The protein localises to the chloroplast thylakoid lumen. It carries out the reaction [protein]-peptidylproline (omega=180) = [protein]-peptidylproline (omega=0). Functionally, PPIases accelerate the folding of proteins. It catalyzes the cis-trans isomerization of proline imidic peptide bonds in oligopeptides. In Arabidopsis thaliana (Mouse-ear cress), this protein is Peptidyl-prolyl cis-trans isomerase FKBP16-3, chloroplastic (FKBP16-3).